Reading from the N-terminus, the 354-residue chain is Uroporphyrinogen decarboxylase (354 aa).

Substrate is bound by residues 30-34, Phe-49, Asp-79, Tyr-156, Ser-211, and His-326; that span reads RQAGR.

This sequence belongs to the uroporphyrinogen decarboxylase family. Homodimer.

It is found in the cytoplasm. The catalysed reaction is uroporphyrinogen III + 4 H(+) = coproporphyrinogen III + 4 CO2. The protein operates within porphyrin-containing compound metabolism; protoporphyrin-IX biosynthesis; coproporphyrinogen-III from 5-aminolevulinate: step 4/4. Catalyzes the decarboxylation of four acetate groups of uroporphyrinogen-III to yield coproporphyrinogen-III. This is Uroporphyrinogen decarboxylase from Salinibacter ruber (strain DSM 13855 / M31).